The sequence spans 534 residues: Signal recognition particle subunit SRP54 (534 aa).

Residues 1-296 form a G-domain region; sequence MVLQDLGRRI…EPKAFIQKLL (296 aa). Residues 109-116, 191-195, and 249-252 contribute to the GTP site; these read GLQGAGKT, DTSGR, and TKTD. The interval 297–534 is M-domain; it reads GMGDMAGLVE…GGGGGRGRGR (238 aa).

It belongs to the GTP-binding SRP family. SRP54 subfamily. In terms of assembly, fungal signal recognition particle consists of a 7S RNA molecule (scR1) and at least six protein subunits: srp72, srp68, srpA/srp54, sec65, srp21 and srp14.

It is found in the cytoplasm. The protein localises to the endoplasmic reticulum. The catalysed reaction is GTP + H2O = GDP + phosphate + H(+). In terms of biological role, signal-recognition-particle (SRP) assembly has a crucial role in targeting secretory proteins to the rough endoplasmic reticulum (ER) membrane. SRP is required for the cotranslational protein translocation for ER import and preferentially recognizes strongly hydrophobic signal sequences. It is involved in targeting the nascent chain-ribosome (RNC) complex to the ER and is proposed to participate in the arrest of nascent chain elongation during membrane targeting. srpA/srp54 binds to the signal sequence of presecretory protein when they emerge from the ribosomes. srpA/srp54 interacts with the scR1 RNA and mediates the association of the resulting SRP-RNC complex with the signal recognition particle receptor (SR) via its alpha subunit srp101. Both, srpA/srp54 and srp101, are locked in their GTP bound forms in the SRP-RNC-SR complex, which dissociates upon transferring the signal sequence to the protein-conducting channel (translocon). After signal sequence transfer, srpA/srp54 and srp101 act as reciprocal GTPase-activating proteins (GAPs), thereby resolving their association. This is Signal recognition particle subunit SRP54 (srpA) from Aspergillus niger.